Here is a 58-residue protein sequence, read N- to C-terminus: UPF0391 membrane protein Sfri_4000 (58 aa).

2 consecutive transmembrane segments (helical) span residues 6–26 (LMFL…IAGA) and 27–47 (AAGI…ISLV).

The protein belongs to the UPF0391 family.

It is found in the cell membrane. This chain is UPF0391 membrane protein Sfri_4000, found in Shewanella frigidimarina (strain NCIMB 400).